Here is a 327-residue protein sequence, read N- to C-terminus: Methionyl-tRNA formyltransferase (327 aa).

Residue 121 to 124 coordinates (6S)-5,6,7,8-tetrahydrofolate; it reads SLLP.

Belongs to the Fmt family.

It carries out the reaction L-methionyl-tRNA(fMet) + (6R)-10-formyltetrahydrofolate = N-formyl-L-methionyl-tRNA(fMet) + (6S)-5,6,7,8-tetrahydrofolate + H(+). Attaches a formyl group to the free amino group of methionyl-tRNA(fMet). The formyl group appears to play a dual role in the initiator identity of N-formylmethionyl-tRNA by promoting its recognition by IF2 and preventing the misappropriation of this tRNA by the elongation apparatus. The polypeptide is Methionyl-tRNA formyltransferase (Burkholderia pseudomallei (strain 1710b)).